The chain runs to 175 residues: Peptide deformylase (175 aa).

Fe cation-binding residues include cysteine 98 and histidine 140. Glutamate 141 is a catalytic residue. Fe cation is bound at residue histidine 144.

The protein belongs to the polypeptide deformylase family. Fe(2+) is required as a cofactor.

The enzyme catalyses N-terminal N-formyl-L-methionyl-[peptide] + H2O = N-terminal L-methionyl-[peptide] + formate. Functionally, removes the formyl group from the N-terminal Met of newly synthesized proteins. Requires at least a dipeptide for an efficient rate of reaction. N-terminal L-methionine is a prerequisite for activity but the enzyme has broad specificity at other positions. This Nitrobacter hamburgensis (strain DSM 10229 / NCIMB 13809 / X14) protein is Peptide deformylase.